The sequence spans 849 residues: Period circadian protein (849 aa).

Residues 1 to 13 are compositionally biased toward polar residues; it reads MNNMDGSENNAKV. The tract at residues 1–79 is disordered; sequence MNNMDGSENN…LKKKKQVETL (79 aa). 2 stretches are compositionally biased toward low complexity: residues 14–27 and 35–58; these read SDSA…NSQS and STHS…SSSS. The Nuclear localization signal signature appears at 63 to 74; the sequence is DQKKEKELKKKK. PAS domains are found at residues 166–296 and 314–416; these read NGFS…QAVP and FVIR…YIIE. Residues 680-746 are disordered; that stretch reads NNTPSVYEKP…VSTSSQWSSS (67 aa). The span at 706–720 shows a compositional bias: basic residues; it reads NKHHCPSSRQFRRKQ. Residues 735-746 are compositionally biased toward low complexity; it reads NPVSTSSQWSSS.

Forms a heterodimer with timeless (TIM); the complex then translocates into the nucleus. Post-translationally, phosphorylated with a circadian rhythmicity.

It localises to the nucleus. Functionally, involved in the generation of biological rhythms. The biological cycle depends on the rhythmic formation and nuclear localization of the tim-per complex. Light induces the degradation of tim, which promotes elimination of per. Nuclear activity of the heterodimer coordinatively regulates per and tim transcription negative feedback loop. Behaves as a negative element in circadian transcriptional loop. Does not appear to bind DNA, suggesting indirect transcriptional inhibition. Expression exhibits prominent circadian variation in adult heads and in particular in the photoreceptor nuclei. The polypeptide is Period circadian protein (per) (Antheraea pernyi (Chinese oak silk moth)).